Here is a 186-residue protein sequence, read N- to C-terminus: CASP-like protein ARALYDRAFT_316979 (186 aa).

Over 1 to 23 (MRRNGDGEEVVAKRRRRIKELVQ) the chain is Cytoplasmic. A helical membrane pass occupies residues 24-44 (VALRGGCLAASATAMAVMLTA). At 45 to 70 (TEEGVADIYGFKLTLSSNWSFSPSYQ) the chain is on the extracellular side. N-linked (GlcNAc...) asparagine glycosylation is present at N62. The chain crosses the membrane as a helical span at residues 71–91 (YVVGACTGTVLYSLFQLCLGV). Residues 92-115 (YRLLTGSPITPSRFQAWLCFTSDQ) are Cytoplasmic-facing. Residues 116–132 (LFGYLMMSAGSAGSGVT) traverse the membrane as a helical segment. Residues 133–161 (NLNKTGIRHTPLPDFCKTLSSFCNHVALS) lie on the Extracellular side of the membrane. N135 carries an N-linked (GlcNAc...) asparagine glycan. The helical transmembrane segment at 162–182 (LLLVFLSFIFLASSSFFTVLV) threads the bilayer. Topologically, residues 183 to 186 (LSTP) are cytoplasmic.

This sequence belongs to the Casparian strip membrane proteins (CASP) family. Homodimer and heterodimers.

The protein localises to the cell membrane. The polypeptide is CASP-like protein ARALYDRAFT_316979 (Arabidopsis lyrata subsp. lyrata (Lyre-leaved rock-cress)).